The primary structure comprises 284 residues: MSNITISQLLALSLAKFNQCDISTKHDLQMIICDVLGVDKTYLYINLDKQLDKNTLKKIDEKILRLLAGEPLAYILGYKYFWNQKLYVTKDTLIPRADTETVVATVLDDIQNKDAQLKILDLGTGTGAIALALAAELANSQVVAVDLYQQSLDVAKKNAQANNITNVKFIQSSWYTNLDTDKFDIIVSNPPYIDLADTNIDQSVKDYEPARALFAADNGLADIRIIISQAKDFLNLGGFIYIEHGFTQADAITALFSQCNFTDIKIVKDLNNNDRCTKAQLGYL.

S-adenosyl-L-methionine is bound by residues 123–127 (GTGTG), aspartate 146, tryptophan 174, and asparagine 189. Residue 189-192 (NPPY) coordinates substrate.

The protein belongs to the protein N5-glutamine methyltransferase family. PrmC subfamily.

The catalysed reaction is L-glutaminyl-[peptide chain release factor] + S-adenosyl-L-methionine = N(5)-methyl-L-glutaminyl-[peptide chain release factor] + S-adenosyl-L-homocysteine + H(+). Methylates the class 1 translation termination release factors RF1/PrfA and RF2/PrfB on the glutamine residue of the universally conserved GGQ motif. This is Release factor glutamine methyltransferase from Francisella tularensis subsp. tularensis (strain SCHU S4 / Schu 4).